The primary structure comprises 288 residues: Killer cell lectin-like receptor 2 (288 aa).

Over 1 to 45 the chain is Cytoplasmic; the sequence is MSEQEVTYTTLRFHKSSGLQNPVRPEETQRPRDVGHRECSVPWKF. A helical; Signal-anchor for type II membrane protein transmembrane segment spans residues 46 to 66; sequence IVIVLGILCFLLLLTVAVLVI. Topologically, residues 67–288 are extracellular; that stretch reads HIFRDGQEKH…SALQRDEDES (222 aa). Residues Asn94, Asn105, and Asn114 are each glycosylated (N-linked (GlcNAc...) asparagine). Residues 144 to 263 form the C-type lectin domain; the sequence is QVEGYWFCCG…THGCICEKRL (120 aa). Intrachain disulfides connect Cys151-Cys156, Cys169-Cys257, Cys173-Cys259, and Cys238-Cys251. Asn177 carries an N-linked (GlcNAc...) asparagine glycan.

As to quaternary structure, homodimer; disulfide-linked.

It is found in the membrane. Its function is as follows. Receptor on natural killer (NK) cells for class I MHC. The polypeptide is Killer cell lectin-like receptor 2 (Klra2) (Mus musculus (Mouse)).